The primary structure comprises 307 residues: D-alanine--D-alanine ligase (307 aa).

The 194-residue stretch at 108-301 folds into the ATP-grasp domain; sequence KEVFAAAGLP…FPEFCAWMVE (194 aa). 135–185 contributes to the ATP binding site; the sequence is LPPPYVVKPNCEGSSVGVYIVQADANGPPRLAPDMPRDLMVETYIPGRELT. Mg(2+) contacts are provided by aspartate 252, glutamate 268, and asparagine 270.

The protein belongs to the D-alanine--D-alanine ligase family. Mg(2+) serves as cofactor. Mn(2+) is required as a cofactor.

Its subcellular location is the cytoplasm. The catalysed reaction is 2 D-alanine + ATP = D-alanyl-D-alanine + ADP + phosphate + H(+). It functions in the pathway cell wall biogenesis; peptidoglycan biosynthesis. Cell wall formation. This chain is D-alanine--D-alanine ligase, found in Cereibacter sphaeroides (strain ATCC 17025 / ATH 2.4.3) (Rhodobacter sphaeroides).